The chain runs to 362 residues: Phospho-N-acetylmuramoyl-pentapeptide-transferase (362 aa).

Transmembrane regions (helical) follow at residues 28–48 (GAVLTALIVAFLVGPRIIAWL), 75–95 (TMGGFMILLALSVSTLLWADL), 100–120 (VWIVLLVTLGYGLIGFWDDYL), 134–154 (AKLVAEIAIALAAAAWVWSLQ), 170–190 (VLLQLSWFYLPFAVFIIVGAG), 201–221 (GLAIVPVMIASGVFAIFSYLV), 241–261 (LAVFCGALVGAGLGFLWFNAP), 265–285 (VFMGDTGSLALGGALGAISVV), 290–310 (LVLGIVGGLFVLETVSVIVQV), and 339–359 (TVVIRFWIIATILALAGLATL).

It belongs to the glycosyltransferase 4 family. MraY subfamily. Requires Mg(2+) as cofactor.

The protein localises to the cell inner membrane. The catalysed reaction is UDP-N-acetyl-alpha-D-muramoyl-L-alanyl-gamma-D-glutamyl-meso-2,6-diaminopimeloyl-D-alanyl-D-alanine + di-trans,octa-cis-undecaprenyl phosphate = di-trans,octa-cis-undecaprenyl diphospho-N-acetyl-alpha-D-muramoyl-L-alanyl-D-glutamyl-meso-2,6-diaminopimeloyl-D-alanyl-D-alanine + UMP. The protein operates within cell wall biogenesis; peptidoglycan biosynthesis. Its function is as follows. Catalyzes the initial step of the lipid cycle reactions in the biosynthesis of the cell wall peptidoglycan: transfers peptidoglycan precursor phospho-MurNAc-pentapeptide from UDP-MurNAc-pentapeptide onto the lipid carrier undecaprenyl phosphate, yielding undecaprenyl-pyrophosphoryl-MurNAc-pentapeptide, known as lipid I. This Paramagnetospirillum magneticum (strain ATCC 700264 / AMB-1) (Magnetospirillum magneticum) protein is Phospho-N-acetylmuramoyl-pentapeptide-transferase.